Consider the following 503-residue polypeptide: Aromatase (503 aa).

Substrate-binding residues include aspartate 309 and methionine 374. Cysteine 437 contacts heme.

The protein belongs to the cytochrome P450 family. Requires heme as cofactor.

The protein resides in the membrane. The catalysed reaction is testosterone + 3 reduced [NADPH--hemoprotein reductase] + 3 O2 = 17beta-estradiol + formate + 3 oxidized [NADPH--hemoprotein reductase] + 4 H2O + 4 H(+). It carries out the reaction androst-4-ene-3,17-dione + 3 reduced [NADPH--hemoprotein reductase] + 3 O2 = estrone + formate + 3 oxidized [NADPH--hemoprotein reductase] + 4 H2O + 4 H(+). Its function is as follows. Catalyzes the formation of aromatic C18 estrogens from C19 androgens. In Callithrix jacchus (White-tufted-ear marmoset), this protein is Aromatase (CYP19A1).